Consider the following 760-residue polypeptide: Ferric/cupric reductase transmembrane component 1 (760 aa).

Positions 1–18 (MKIQQLIVFLFAVVLIDA) are cleaved as a signal peptide. Residues 19-212 (RTPKRYSELD…NNNFNLSINY (194 aa)) are Extracellular-facing. Residues N78, N91, N111, N143, N155, and N207 are each glycosylated (N-linked (GlcNAc...) asparagine). A disordered region spans residues 119-177 (TTKSSSGSKTSASASKSSKSTGSSNASKSSTNAHGSNSSTSSTSSSSSKSGKGNSGTST). A helical membrane pass occupies residues 213–233 (GSGLLGYWAGILAIAIFANMI). The Cytoplasmic segment spans residues 234–288 (KKMFPSLTNYLSGSISNLFRKHLFLPATFRKKKAQEFSIGVYGFFDGLIPTRLET). Residues 289–309 (IIVVIFVVLTGLFSALHIHHV) traverse the membrane as a helical segment. Topologically, residues 310–324 (KDNPQYATKNAELGH) are extracellular. The helical transmembrane segment at 325–345 (LIADRTGILGTFLIPLLILFG) threads the bilayer. A Ferric oxidoreductase domain is found at 330-445 (TGILGTFLIP…HIVLVVFFVV (116 aa)). At 346–371 (GRNNFLQWLTGWDFATFIMYHRWISR) the chain is on the cytoplasmic side. Heme-binding residues include H366 and H380. The chain crosses the membrane as a helical span at residues 372-392 (VDVLLIIVHAITFSVSDKATG). The Extracellular segment spans residues 393 to 403 (KYNTRMKRDFM). Residues 404-424 (IWGTVSTICGGFILFQAMLFF) traverse the membrane as a helical segment. At 425–430 (RRKCYE) the chain is on the cytoplasmic side. The helical transmembrane segment at 431 to 451 (VFFLIHIVLVVFFVVGGYYHL) threads the bilayer. Positions 436 and 450 each coordinate heme. Residues 452-760 (ESQGYGDFMW…EYHEQLQTWA (309 aa)) lie on the Extracellular side of the membrane. An FAD-binding FR-type domain is found at 465–583 (AVWAFDRVVR…EGPYGEPSSA (119 aa)). 575-578 (GPYG) is an NADP(+) binding site. An N-linked (GlcNAc...) asparagine glycan is attached at N615. 726–727 (CG) is an NADP(+) binding site. N744 is a glycosylation site (N-linked (GlcNAc...) asparagine).

This sequence belongs to the ferric reductase (FRE) family. It depends on FAD as a cofactor. Heme serves as cofactor.

Its subcellular location is the cell membrane. The enzyme catalyses 2 a Fe(II)-siderophore + NADP(+) + H(+) = 2 a Fe(III)-siderophore + NADPH. Its function is as follows. Ferric reductase responsible for reducing extracellular iron and copper prior to import. Catalyzes the reductive uptake of Fe(3+)-salts and Fe(3+) bound to catecholate or hydroxamate siderophores. Fe(3+) is reduced to Fe(2+), which then dissociates from the siderophore and can be imported by the high-affinity Fe(2+) transport complex in the plasma membrane. Also participates in Cu(2+) reduction and Cu(+) uptake. Involved in maintenance of cell wall integrity (CWI), mitochondrial function, and interaction between the pathogen and the host. The chain is Ferric/cupric reductase transmembrane component 1 from Candida albicans (strain SC5314 / ATCC MYA-2876) (Yeast).